A 137-amino-acid chain; its full sequence is Large ribosomal subunit protein uL16 (137 aa).

Residues 1–16 (MLQPKRTKFRKMQKGR) show a composition bias toward basic residues. The interval 1-22 (MLQPKRTKFRKMQKGRIRGEAK) is disordered.

It belongs to the universal ribosomal protein uL16 family. In terms of assembly, part of the 50S ribosomal subunit.

Its function is as follows. Binds 23S rRNA and is also seen to make contacts with the A and possibly P site tRNAs. The chain is Large ribosomal subunit protein uL16 from Jannaschia sp. (strain CCS1).